Here is a 62-residue protein sequence, read N- to C-terminus: Beta-defensin 33 (62 aa).

The first 20 residues, 1-20 (MRLLFLLFLLLVCLAQKTSG), serve as a signal peptide directing secretion. 3 cysteine pairs are disulfide-bonded: C30/C59, C37/C52, and C45/C60.

The protein belongs to the beta-defensin family.

The protein resides in the secreted. In terms of biological role, has antibacterial activity. In Rattus norvegicus (Rat), this protein is Beta-defensin 33 (Defb33).